We begin with the raw amino-acid sequence, 98 residues long: NADH-ubiquinone oxidoreductase chain 4L (98 aa).

A run of 3 helical transmembrane segments spans residues 1–21, 29–49, and 61–81; these read MPFI…GLLI, SLLC…TMTL, and IILL…LILI.

It belongs to the complex I subunit 4L family. In terms of assembly, core subunit of respiratory chain NADH dehydrogenase (Complex I) which is composed of 45 different subunits.

It is found in the mitochondrion inner membrane. The enzyme catalyses a ubiquinone + NADH + 5 H(+)(in) = a ubiquinol + NAD(+) + 4 H(+)(out). Core subunit of the mitochondrial membrane respiratory chain NADH dehydrogenase (Complex I) which catalyzes electron transfer from NADH through the respiratory chain, using ubiquinone as an electron acceptor. Part of the enzyme membrane arm which is embedded in the lipid bilayer and involved in proton translocation. The protein is NADH-ubiquinone oxidoreductase chain 4L (MT-ND4L) of Cebus albifrons (White-fronted capuchin).